The primary structure comprises 223 residues: Translation initiation factor 6 (223 aa).

The protein belongs to the eIF-6 family.

Functionally, binds to the 50S ribosomal subunit and prevents its association with the 30S ribosomal subunit to form the 70S initiation complex. This chain is Translation initiation factor 6, found in Thermofilum pendens (strain DSM 2475 / Hrk 5).